Here is a 381-residue protein sequence, read N- to C-terminus: MPFDHAHWQERFDALRTEHHVPGAALAVFVDGDLHELASGVLHRGTGVAVTTDSVFQSGSVAKVYTATLVMQLVDAGELRLDTRVADVLPGFAVADAEVARTVTIGRLLSHTSGIAGDFTLDTGRGDDCLARFVDACADVGQDCPPDTVISYCSTGYAILGRIVEVLTGQSWDDALRDRLFTPLGLHQSMTLPEEALRFRVAMSHLGELGTDPEPAPVWDMLPRSAGPYGRVLITAADVVRFARMHLDDGVAPDGTRVLSAASAALMRQQVAGCLDTWSFMATGWGHGWALYDWDGVPGYGHDGASGGQFSYLRVVPGSGVVAALLTNGGVATSFFTDLFRELLGELAGVRMPEVFAPPAEPRPIDVAPLAGTYEREGGAP.

Ser60 acts as the Acyl-ester intermediate in catalysis. The helical transmembrane segment at Val271–Leu291 threads the bilayer. Gly299–Gly308 serves as a coordination point for NAD(+). The helical transmembrane segment at Val315–Phe340 threads the bilayer.

Belongs to the beta-lactamase family.

Its subcellular location is the cell membrane. In terms of biological role, involved in cell wall biosynthesis and may also act as a sensor of external penicillins. This is Penicillin-binding protein 4 (pbp) from Amycolatopsis lactamdurans (Nocardia lactamdurans).